The chain runs to 492 residues: Ketol-acid reductoisomerase (NADP(+)) (492 aa).

One can recognise a KARI N-terminal Rossmann domain in the interval 15–208; it reads AQLGKCRFMA…GGHRAGVLES (194 aa). NADP(+) contacts are provided by residues 45–48, Arg68, Arg76, Ser78, and 108–110; these read CGAQ and DKQ. His132 is an active-site residue. Residue Gly158 participates in NADP(+) binding. KARI C-terminal knotted domains are found at residues 209-344 and 345-485; these read SFVA…TAAQ and FEGK…MTDM. 4 residues coordinate Mg(2+): Asp217, Glu221, Glu389, and Glu393. Ser414 provides a ligand contact to substrate.

The protein belongs to the ketol-acid reductoisomerase family. Requires Mg(2+) as cofactor.

It catalyses the reaction (2R)-2,3-dihydroxy-3-methylbutanoate + NADP(+) = (2S)-2-acetolactate + NADPH + H(+). The catalysed reaction is (2R,3R)-2,3-dihydroxy-3-methylpentanoate + NADP(+) = (S)-2-ethyl-2-hydroxy-3-oxobutanoate + NADPH + H(+). The protein operates within amino-acid biosynthesis; L-isoleucine biosynthesis; L-isoleucine from 2-oxobutanoate: step 2/4. It participates in amino-acid biosynthesis; L-valine biosynthesis; L-valine from pyruvate: step 2/4. Involved in the biosynthesis of branched-chain amino acids (BCAA). Catalyzes an alkyl-migration followed by a ketol-acid reduction of (S)-2-acetolactate (S2AL) to yield (R)-2,3-dihydroxy-isovalerate. In the isomerase reaction, S2AL is rearranged via a Mg-dependent methyl migration to produce 3-hydroxy-3-methyl-2-ketobutyrate (HMKB). In the reductase reaction, this 2-ketoacid undergoes a metal-dependent reduction by NADPH to yield (R)-2,3-dihydroxy-isovalerate. This is Ketol-acid reductoisomerase (NADP(+)) from Erwinia tasmaniensis (strain DSM 17950 / CFBP 7177 / CIP 109463 / NCPPB 4357 / Et1/99).